The primary structure comprises 204 residues: Holliday junction branch migration complex subunit RuvA (204 aa).

The tract at residues 1 to 64 (MIAQIRGKLI…QDSILLVGFC (64 aa)) is domain I. The segment at 65 to 143 (TENEKQLFKL…GWTSKEQITF (79 aa)) is domain II. Positions 144–154 (INNKKDAIDQS) are flexible linker. Positions 154–204 (SVMEEDAISALINLGYKSQAAKDAIDRVISEGGENKSLDVILKKALKVLAM) are domain III.

It belongs to the RuvA family. As to quaternary structure, homotetramer. Forms an RuvA(8)-RuvB(12)-Holliday junction (HJ) complex. HJ DNA is sandwiched between 2 RuvA tetramers; dsDNA enters through RuvA and exits via RuvB. An RuvB hexamer assembles on each DNA strand where it exits the tetramer. Each RuvB hexamer is contacted by two RuvA subunits (via domain III) on 2 adjacent RuvB subunits; this complex drives branch migration. In the full resolvosome a probable DNA-RuvA(4)-RuvB(12)-RuvC(2) complex forms which resolves the HJ.

The protein localises to the cytoplasm. The RuvA-RuvB-RuvC complex processes Holliday junction (HJ) DNA during genetic recombination and DNA repair, while the RuvA-RuvB complex plays an important role in the rescue of blocked DNA replication forks via replication fork reversal (RFR). RuvA specifically binds to HJ cruciform DNA, conferring on it an open structure. The RuvB hexamer acts as an ATP-dependent pump, pulling dsDNA into and through the RuvAB complex. HJ branch migration allows RuvC to scan DNA until it finds its consensus sequence, where it cleaves and resolves the cruciform DNA. This is Holliday junction branch migration complex subunit RuvA from Syntrophus aciditrophicus (strain SB).